Consider the following 475-residue polypeptide: Vasculin-like protein 1 (475 aa).

A phosphoserine mark is found at S49 and S76. 2 disordered regions span residues 92 to 115 (NLSGWHGSSRGHDGMSQRAGGSTG) and 160 to 191 (PSLNPEAGKQNQPCRPIGTPSGVWENPPSAKQ). S202 carries the post-translational modification Phosphoserine. 2 disordered regions span residues 237 to 271 (LVPKPAPPPSKPNAWKANRMEHKPGSLSSSREAAL) and 292 to 318 (PKESPSSTTPPIEISSSRLTKLTRRTT). Residues 294 to 311 (ESPSSTTPPIEISSSRLT) are compositionally biased toward low complexity. A Phosphothreonine modification is found at T300. S383 is modified (phosphoserine). A disordered region spans residues 456 to 475 (CEDSDTETSSSETSDDDAWK).

This sequence belongs to the vasculin family.

It is found in the nucleus. In terms of biological role, possible transcription factor. In Rattus norvegicus (Rat), this protein is Vasculin-like protein 1 (Gpbp1l1).